The following is a 291-amino-acid chain: tRNA dimethylallyltransferase (291 aa).

9 to 16 (GTTASGKT) is a binding site for ATP. Substrate is bound at residue 11 to 16 (TASGKT). An interaction with substrate tRNA region spans residues 34–37 (DSLC).

It belongs to the IPP transferase family. Monomer. Mg(2+) is required as a cofactor.

It carries out the reaction adenosine(37) in tRNA + dimethylallyl diphosphate = N(6)-dimethylallyladenosine(37) in tRNA + diphosphate. Catalyzes the transfer of a dimethylallyl group onto the adenine at position 37 in tRNAs that read codons beginning with uridine, leading to the formation of N6-(dimethylallyl)adenosine (i(6)A). The polypeptide is tRNA dimethylallyltransferase (Campylobacter lari (strain RM2100 / D67 / ATCC BAA-1060)).